The chain runs to 431 residues: Histidinol dehydrogenase (431 aa).

Residues Tyr-130, Gln-191, and Asn-214 each coordinate NAD(+). Substrate is bound by residues Ser-237, Gln-259, and His-262. Zn(2+)-binding residues include Gln-259 and His-262. Catalysis depends on proton acceptor residues Glu-327 and His-328. Substrate contacts are provided by His-328, Asp-361, Glu-415, and His-420. Asp-361 lines the Zn(2+) pocket. A Zn(2+)-binding site is contributed by His-420.

The protein belongs to the histidinol dehydrogenase family. The cofactor is Zn(2+).

It carries out the reaction L-histidinol + 2 NAD(+) + H2O = L-histidine + 2 NADH + 3 H(+). Its pathway is amino-acid biosynthesis; L-histidine biosynthesis; L-histidine from 5-phospho-alpha-D-ribose 1-diphosphate: step 9/9. Catalyzes the sequential NAD-dependent oxidations of L-histidinol to L-histidinaldehyde and then to L-histidine. This chain is Histidinol dehydrogenase, found in Rhodopseudomonas palustris (strain ATCC BAA-98 / CGA009).